The primary structure comprises 151 residues: FAD synthase (151 aa).

ATP contacts are provided by residues 21–22 (TF), 26–29 (HPGH), and aspartate 104.

This sequence belongs to the archaeal FAD synthase family. Homodimer. A divalent metal cation serves as cofactor.

The enzyme catalyses FMN + ATP + H(+) = FAD + diphosphate. Its pathway is cofactor biosynthesis; FAD biosynthesis; FAD from FMN: step 1/1. Catalyzes the transfer of the AMP portion of ATP to flavin mononucleotide (FMN) to produce flavin adenine dinucleotide (FAD) coenzyme. This is FAD synthase from Methanosarcina mazei (strain ATCC BAA-159 / DSM 3647 / Goe1 / Go1 / JCM 11833 / OCM 88) (Methanosarcina frisia).